The chain runs to 198 residues: Holliday junction branch migration complex subunit RuvA (198 aa).

Residues 1–64 are domain I; it reads MIAHLRGTLL…EDAIALFGFL (64 aa). The tract at residues 65–141 is domain II; sequence DREEKRLFER…LDDLIAAAPA (77 aa). The segment at 141-145 is flexible linker; it reads AAGPV. Positions 146 to 198 are domain III; it reads AAGPAAEDVLSALLNLGYQRPAALKAIETAVEKDAAAGEDFDLLFRAALKLIR.

Belongs to the RuvA family. As to quaternary structure, homotetramer. Forms an RuvA(8)-RuvB(12)-Holliday junction (HJ) complex. HJ DNA is sandwiched between 2 RuvA tetramers; dsDNA enters through RuvA and exits via RuvB. An RuvB hexamer assembles on each DNA strand where it exits the tetramer. Each RuvB hexamer is contacted by two RuvA subunits (via domain III) on 2 adjacent RuvB subunits; this complex drives branch migration. In the full resolvosome a probable DNA-RuvA(4)-RuvB(12)-RuvC(2) complex forms which resolves the HJ.

It is found in the cytoplasm. The RuvA-RuvB-RuvC complex processes Holliday junction (HJ) DNA during genetic recombination and DNA repair, while the RuvA-RuvB complex plays an important role in the rescue of blocked DNA replication forks via replication fork reversal (RFR). RuvA specifically binds to HJ cruciform DNA, conferring on it an open structure. The RuvB hexamer acts as an ATP-dependent pump, pulling dsDNA into and through the RuvAB complex. HJ branch migration allows RuvC to scan DNA until it finds its consensus sequence, where it cleaves and resolves the cruciform DNA. This Acidobacterium capsulatum (strain ATCC 51196 / DSM 11244 / BCRC 80197 / JCM 7670 / NBRC 15755 / NCIMB 13165 / 161) protein is Holliday junction branch migration complex subunit RuvA.